The sequence spans 302 residues: Probable protein S-acyltransferase 13 (302 aa).

2 helical membrane passes run 17–37 (SIMI…VVVV) and 56–76 (VLAF…SVVV). A DHHC domain is found at 116-166 (RYCRKCNQYKPPRSHHCSVCGRCILKMDHHCVWVVNCVGANNYKSFLLFLF). Cysteine 146 (S-palmitoyl cysteine intermediate) is an active-site residue. The next 2 membrane-spanning stretches (helical) occupy residues 166-186 (FYTF…FLVF) and 204-224 (SFVA…FLIM).

The protein belongs to the DHHC palmitoyltransferase family.

It is found in the cell membrane. The protein localises to the cytoplasmic vesicle membrane. It catalyses the reaction L-cysteinyl-[protein] + hexadecanoyl-CoA = S-hexadecanoyl-L-cysteinyl-[protein] + CoA. Functionally, palmitoyl acyltransferase. The chain is Probable protein S-acyltransferase 13 (PAT13) from Arabidopsis thaliana (Mouse-ear cress).